A 238-amino-acid polypeptide reads, in one-letter code: Ribonuclease PH (238 aa).

Residues arginine 86 and 124 to 126 (GTR) contribute to the phosphate site.

It belongs to the RNase PH family. In terms of assembly, homohexameric ring arranged as a trimer of dimers.

It catalyses the reaction tRNA(n+1) + phosphate = tRNA(n) + a ribonucleoside 5'-diphosphate. Phosphorolytic 3'-5' exoribonuclease that plays an important role in tRNA 3'-end maturation. Removes nucleotide residues following the 3'-CCA terminus of tRNAs; can also add nucleotides to the ends of RNA molecules by using nucleoside diphosphates as substrates, but this may not be physiologically important. Probably plays a role in initiation of 16S rRNA degradation (leading to ribosome degradation) during starvation. This is Ribonuclease PH from Escherichia coli O6:K15:H31 (strain 536 / UPEC).